The following is a 252-amino-acid chain: Trans-aconitate 2-methyltransferase (252 aa).

This sequence belongs to the methyltransferase superfamily. Tam family.

It localises to the cytoplasm. It catalyses the reaction trans-aconitate + S-adenosyl-L-methionine = (E)-3-(methoxycarbonyl)pent-2-enedioate + S-adenosyl-L-homocysteine. Functionally, catalyzes the S-adenosylmethionine monomethyl esterification of trans-aconitate. This is Trans-aconitate 2-methyltransferase from Escherichia fergusonii (strain ATCC 35469 / DSM 13698 / CCUG 18766 / IAM 14443 / JCM 21226 / LMG 7866 / NBRC 102419 / NCTC 12128 / CDC 0568-73).